Reading from the N-terminus, the 340-residue chain is Phosphoribosylformylglycinamidine cyclo-ligase (340 aa).

The protein belongs to the AIR synthase family.

It is found in the cytoplasm. The catalysed reaction is 2-formamido-N(1)-(5-O-phospho-beta-D-ribosyl)acetamidine + ATP = 5-amino-1-(5-phospho-beta-D-ribosyl)imidazole + ADP + phosphate + H(+). Its pathway is purine metabolism; IMP biosynthesis via de novo pathway; 5-amino-1-(5-phospho-D-ribosyl)imidazole from N(2)-formyl-N(1)-(5-phospho-D-ribosyl)glycinamide: step 2/2. This chain is Phosphoribosylformylglycinamidine cyclo-ligase, found in Streptococcus pneumoniae (strain Taiwan19F-14).